We begin with the raw amino-acid sequence, 204 residues long: Ras-related protein RabL (204 aa).

14–21 (GDSNVGKT) lines the GTP pocket. The short motif at 36–44 (RPPSIGPDY) is the Effector region element. GTP contacts are provided by residues 62–66 (DTCGQ) and 120–123 (TKSD). S-geranylgeranyl cysteine attachment occurs at residues C203 and C204.

The protein belongs to the small GTPase superfamily. Rab family.

The protein resides in the cell membrane. The polypeptide is Ras-related protein RabL (rabL) (Dictyostelium discoideum (Social amoeba)).